Consider the following 229-residue polypeptide: Juvenile hormone-binding protein (229 aa).

The N-terminal stretch at 1 to 3 is a signal peptide; sequence VLS.

The protein localises to the secreted. Prevents juvenile hormone from being hydrolyzed by general esterases by combining with it specifically. This is Juvenile hormone-binding protein (JHBP) from Manduca sexta (Tobacco hawkmoth).